The following is an 805-amino-acid chain: DNA gyrase subunit B (805 aa).

Positions 435–550 (SEIFIVEGDS…RGYIYIAQPP (116 aa)) constitute a Toprim domain. Mg(2+) is bound by residues E441, D515, and D517.

This sequence belongs to the type II topoisomerase GyrB family. As to quaternary structure, heterotetramer, composed of two GyrA and two GyrB chains. In the heterotetramer, GyrA contains the active site tyrosine that forms a transient covalent intermediate with DNA, while GyrB binds cofactors and catalyzes ATP hydrolysis. The cofactor is Mg(2+). It depends on Mn(2+) as a cofactor. Ca(2+) serves as cofactor.

The protein localises to the cytoplasm. The catalysed reaction is ATP-dependent breakage, passage and rejoining of double-stranded DNA.. Functionally, a type II topoisomerase that negatively supercoils closed circular double-stranded (ds) DNA in an ATP-dependent manner to modulate DNA topology and maintain chromosomes in an underwound state. Negative supercoiling favors strand separation, and DNA replication, transcription, recombination and repair, all of which involve strand separation. Also able to catalyze the interconversion of other topological isomers of dsDNA rings, including catenanes and knotted rings. Type II topoisomerases break and join 2 DNA strands simultaneously in an ATP-dependent manner. The polypeptide is DNA gyrase subunit B (Caulobacter vibrioides (strain ATCC 19089 / CIP 103742 / CB 15) (Caulobacter crescentus)).